The chain runs to 381 residues: Homoserine O-acetyltransferase (381 aa).

An AB hydrolase-1 domain is found at 47–359 (NAILICHALT…DKGHDAFLLD (313 aa)). The active-site Nucleophile is the S153. R223 provides a ligand contact to substrate. Residues D320 and H353 contribute to the active site. D354 is a substrate binding site.

The protein belongs to the AB hydrolase superfamily. MetX family. Homodimer.

It localises to the cytoplasm. It carries out the reaction L-homoserine + acetyl-CoA = O-acetyl-L-homoserine + CoA. It participates in amino-acid biosynthesis; L-methionine biosynthesis via de novo pathway; O-acetyl-L-homoserine from L-homoserine: step 1/1. Transfers an acetyl group from acetyl-CoA to L-homoserine, forming acetyl-L-homoserine. This chain is Homoserine O-acetyltransferase, found in Acidiphilium cryptum (strain JF-5).